Reading from the N-terminus, the 63-residue chain is Large ribosomal subunit protein uL30 (63 aa).

Belongs to the universal ribosomal protein uL30 family. In terms of assembly, part of the 50S ribosomal subunit.

The chain is Large ribosomal subunit protein uL30 from Geobacillus stearothermophilus (Bacillus stearothermophilus).